The following is a 213-amino-acid chain: Cytochrome c biogenesis ATP-binding export protein CcmA (213 aa).

In terms of domain architecture, ABC transporter spans 3–211 (LTAENLGVRR…QMTGFAGVET (209 aa)). ATP is bound at residue 35 to 42 (GRNGSGKS).

Belongs to the ABC transporter superfamily. CcmA exporter (TC 3.A.1.107) family. As to quaternary structure, the complex is composed of two ATP-binding proteins (CcmA) and two transmembrane proteins (CcmB).

It is found in the cell inner membrane. The enzyme catalyses heme b(in) + ATP + H2O = heme b(out) + ADP + phosphate + H(+). Functionally, part of the ABC transporter complex CcmAB involved in the biogenesis of c-type cytochromes; once thought to export heme, this seems not to be the case, but its exact role is uncertain. Responsible for energy coupling to the transport system. The sequence is that of Cytochrome c biogenesis ATP-binding export protein CcmA from Agrobacterium fabrum (strain C58 / ATCC 33970) (Agrobacterium tumefaciens (strain C58)).